The chain runs to 556 residues: Chaperone protein HscC (556 aa).

It belongs to the heat shock protein 70 family.

Its function is as follows. Probable chaperone. Has ATPase activity. Not stimulated by DnaJ. This Escherichia coli (strain K12) protein is Chaperone protein HscC (hscC).